Reading from the N-terminus, the 246-residue chain is Probable transcriptional regulatory protein RD1_2018 (246 aa).

Belongs to the TACO1 family.

It is found in the cytoplasm. This is Probable transcriptional regulatory protein RD1_2018 from Roseobacter denitrificans (strain ATCC 33942 / OCh 114) (Erythrobacter sp. (strain OCh 114)).